Reading from the N-terminus, the 383-residue chain is Succinyl-diaminopimelate desuccinylase (383 aa).

His-68 contributes to the Zn(2+) binding site. Residue Asp-70 is part of the active site. Asp-100 lines the Zn(2+) pocket. Glu-130 functions as the Proton acceptor in the catalytic mechanism. Positions 131, 159, and 352 each coordinate Zn(2+).

Belongs to the peptidase M20A family. DapE subfamily. Homodimer. Zn(2+) is required as a cofactor. Requires Co(2+) as cofactor.

The catalysed reaction is N-succinyl-(2S,6S)-2,6-diaminopimelate + H2O = (2S,6S)-2,6-diaminopimelate + succinate. The protein operates within amino-acid biosynthesis; L-lysine biosynthesis via DAP pathway; LL-2,6-diaminopimelate from (S)-tetrahydrodipicolinate (succinylase route): step 3/3. Its function is as follows. Catalyzes the hydrolysis of N-succinyl-L,L-diaminopimelic acid (SDAP), forming succinate and LL-2,6-diaminopimelate (DAP), an intermediate involved in the bacterial biosynthesis of lysine and meso-diaminopimelic acid, an essential component of bacterial cell walls. In Granulibacter bethesdensis (strain ATCC BAA-1260 / CGDNIH1), this protein is Succinyl-diaminopimelate desuccinylase.